Here is a 313-residue protein sequence, read N- to C-terminus: Ribosomal RNA small subunit methyltransferase H (313 aa).

S-adenosyl-L-methionine is bound by residues 35 to 37 (GGH), D55, F80, D102, and Q109.

The protein belongs to the methyltransferase superfamily. RsmH family.

It is found in the cytoplasm. The catalysed reaction is cytidine(1402) in 16S rRNA + S-adenosyl-L-methionine = N(4)-methylcytidine(1402) in 16S rRNA + S-adenosyl-L-homocysteine + H(+). In terms of biological role, specifically methylates the N4 position of cytidine in position 1402 (C1402) of 16S rRNA. This Shewanella woodyi (strain ATCC 51908 / MS32) protein is Ribosomal RNA small subunit methyltransferase H.